The following is a 612-amino-acid chain: Protein MUK1 (612 aa).

The span at 40-50 (EDQNDNERSSC) shows a compositional bias: basic and acidic residues. The tract at residues 40-66 (EDQNDNERSSCDGDENSTTGERLENNK) is disordered. Residues 55 to 66 (NSTTGERLENNK) are compositionally biased toward polar residues. Ser67, Ser163, Ser185, and Ser245 each carry phosphoserine. Residues 273-414 (TEYNKLLNEK…VEGLTKNDFS (142 aa)) form the VPS9 domain. The interval 494 to 560 (IRSYTPPHPN…SSASLEHGNR (67 aa)) is disordered. Low complexity predominate over residues 503 to 517 (NNTSNNNLHSSNNLN). Residues 518–529 (IPRSSSQLSMEL) show a composition bias toward polar residues. A compositionally biased stretch (basic and acidic residues) spans 530-542 (SNRDTTEMSRDGS). The span at 543-554 (RSTSSSSRSSAS) shows a compositional bias: low complexity.

The protein localises to the cytoplasm. Functionally, putative GTPase-activating protein. The polypeptide is Protein MUK1 (MUK1) (Saccharomyces cerevisiae (strain ATCC 204508 / S288c) (Baker's yeast)).